The following is a 158-amino-acid chain: 2-C-methyl-D-erythritol 2,4-cyclodiphosphate synthase (158 aa).

A divalent metal cation contacts are provided by aspartate 9 and histidine 11. Residues 9 to 11 and 35 to 36 each bind 4-CDP-2-C-methyl-D-erythritol 2-phosphate; these read DVH and HS. Histidine 43 contributes to the a divalent metal cation binding site. Residues 57-59, 62-66, 101-107, 133-136, phenylalanine 140, and arginine 143 each bind 4-CDP-2-C-methyl-D-erythritol 2-phosphate; these read DIG, FPDTD, AQAPKMA, and TTTE.

Belongs to the IspF family. Homotrimer. A divalent metal cation is required as a cofactor.

The enzyme catalyses 4-CDP-2-C-methyl-D-erythritol 2-phosphate = 2-C-methyl-D-erythritol 2,4-cyclic diphosphate + CMP. It participates in isoprenoid biosynthesis; isopentenyl diphosphate biosynthesis via DXP pathway; isopentenyl diphosphate from 1-deoxy-D-xylulose 5-phosphate: step 4/6. In terms of biological role, involved in the biosynthesis of isopentenyl diphosphate (IPP) and dimethylallyl diphosphate (DMAPP), two major building blocks of isoprenoid compounds. Catalyzes the conversion of 4-diphosphocytidyl-2-C-methyl-D-erythritol 2-phosphate (CDP-ME2P) to 2-C-methyl-D-erythritol 2,4-cyclodiphosphate (ME-CPP) with a corresponding release of cytidine 5-monophosphate (CMP). This chain is 2-C-methyl-D-erythritol 2,4-cyclodiphosphate synthase, found in Vibrio vulnificus (strain YJ016).